The following is a 561-amino-acid chain: Acyl-CoA ligase frbB (561 aa).

Residues 213 to 221 (TSGTSGAQK), 354 to 359 (PGWGLT), D437, R456, and K551 contribute to the ATP site. The segment at 284–354 (DLKRVLGSIA…TLRPKWHLQP (71 aa)) is SBD1. Residues 355–417 (GWGLTEGGGA…MKSPSVIAGY (63 aa)) are SBD2.

It belongs to the ATP-dependent AMP-binding enzyme family.

It functions in the pathway antifungal biosynthesis. Acyl-CoA ligase; part of the gene cluster that mediates the biosynthesis of the antifungal antibiotic FR901469, an inhibitor of beta-1,3-glucansynthase, exerting antifungal activity against the pathogenes Candida albicans and Aspergillus fumigatus. FR901469 is a cyclic depsipeptide containing 12 amino acid residues and a fatty acid chain. The NRPS frbI contains 12 modules responsible for the formation of the depsipeptide backbone which is denoted as Acyl-Thr-Ala-Tyr-Val-4OHPro-Thr-Thr-3OHPro-threo3OHGln-Gly-Thr-Orn-OH (C71H116N14O23). The PKS frbB is probably involved in the production of the hydrocarbon chain, and the acyl-CoA ligase frbC might be involved in the transport of the chain to the peptide ptoduct of frbI. Because FR901469 contains 3 hydroxylated amino acid residues, the 3 oxygenases frbA, frbH, and frbJ might be participating in amino acid hydroxylation. As no thioesterase domains were detected in frbI or frbB, the thioesterases frbD and frbE may instead release and cyclize the products of the NRPS and PKS, respectively. This Dothideomycetidae sp. (strain 11243) (Fungal sp. (strain No.11243)) protein is Acyl-CoA ligase frbB.